We begin with the raw amino-acid sequence, 633 residues long: MNSSDEEKQLQLITSLKEQAIGEYEDLRAENQKTKETCDKIRQERDEAVKKLEEFQKISHMVIEEVNFMQNHLEIEKTCRESAEALATKLNKENKTLKRISMLYMAKLGPDVITEEINIDDDDPGTDTDAAAETCVSVQCQKQIKELRDQIVSVQEEKKVLAIELESLKSKLGEVMEEVNKVKQEKAVLNSEVLEQRKVLEKCNRVSVLAVEEYEELQVNLELEKDLRKKAESFAQEMFIEQNKLKRQSHLLLQSSLPDQQLLKALDENAKLIQQLEEERIQHQQKVKELEERLENEALHKEIHNLRQQLELLEDDKRELEQKYQSSEEKARNLKHSVDELQKRVNQSENSVPPPPPPPPPLPPPPPNPIRSLMSMIRKRSHPSGGSTKKEKATQPETAEEVTDLKRQAVEEMMDRIKKGVHLRPVNQTARPKAKPDSLKGSESAVDELKGILGTLNKSTSSRSLKSLGPENSETELERILRRRKLTAEADSSSPTGILATSESKSMPVLGSVSSVTKSALNKKTLEAEFNNPCPLTPEPGEGPRKLEGCTNSKVTFQPPSKGGYRRKCVGSENQSEPVVVLDPVSTHEPQTKDQAAEKDPTQCKEEERGETQPEFKEDSSGGKTGETDSSNC.

Methionine 1 carries the N-acetylmethionine modification. A phosphoserine mark is found at serine 3 and serine 4. Residues 7 to 353 (EKQLQLITSL…RVNQSENSVP (347 aa)) are a coiled coil. A phosphoserine; by PAK1 mark is found at serine 101 and serine 249. The tract at residues 343 to 508 (KRVNQSENSV…LATSESKSMP (166 aa)) is disordered. Residues 352-369 (VPPPPPPPPPLPPPPPNP) show a composition bias toward pro residues. A Phosphoserine modification is found at serine 375. Over residues 403–418 (TDLKRQAVEEMMDRIK) the composition is skewed to basic and acidic residues. A compositionally biased stretch (polar residues) spans 456–465 (LNKSTSSRSL). At serine 473 the chain carries Phosphoserine. Threonine 487 is modified (phosphothreonine). Positions 490–505 (ADSSSPTGILATSESK) are enriched in polar residues. Serine 494 bears the Phosphoserine mark. Threonine 496 is modified (phosphothreonine). Phosphoserine occurs at positions 506 and 515. Residues 525 to 633 (TLEAEFNNPC…KTGETDSSNC (109 aa)) form a disordered region. Threonine 537 carries the phosphothreonine modification. Polar residues predominate over residues 550-559 (CTNSKVTFQP). Residues 590 to 621 (PQTKDQAAEKDPTQCKEEERGETQPEFKEDSS) are compositionally biased toward basic and acidic residues.

It belongs to the shootin family. In terms of assembly, interacts with PFN2. Interacts (via N-terminus) with KIF20B; this interaction is direct and promotes the association of SHTN1 to microtubules in primary neurons. Associates with microtubule. Interacts with L1CAM; this interaction occurs in axonal growth cones. Interacts with actin filament retrograde flow; this interaction is enhanced in a netrin-1- and PAK1-dependent manner and promotes F-actin-substrate coupling and concomitant formation of traction forces at axonal growth cones. Interacts with RUFY3. In terms of processing, phosphorylated on Ser-101 and Ser-249 by PAK1 through a CDC42- and RAC1-dependent signaling pathway, which enhances its association with F-actin retrograde flow in filopodia and lamellipodia of axonal growth cones. Phosphorylation on Ser-101 and Ser-249 is increased by netrin-1. Brain-specific (at protein level). Expressed in hippocampal neurons.

It localises to the perikaryon. Its subcellular location is the cell projection. It is found in the axon. The protein resides in the growth cone. The protein localises to the cytoplasm. It localises to the cytoskeleton. Its subcellular location is the filopodium. It is found in the lamellipodium. Functionally, involved in the generation of internal asymmetric signals required for neuronal polarization and neurite outgrowth. Mediates netrin-1-induced F-actin-substrate coupling or 'clutch engagement' within the axon growth cone through activation of CDC42, RAC1 and PAK1-dependent signaling pathway, thereby converting the F-actin retrograde flow into traction forces, concomitantly with filopodium extension and axon outgrowth. Plays a role in cytoskeletal organization by regulating the subcellular localization of phosphoinositide 3-kinase (PI3K) activity at the axonal growth cone. Also plays a role in regenerative neurite outgrowth. In the developing cortex, cooperates with KIF20B to promote both the transition from the multipolar to the bipolar stage and the radial migration of cortical neurons from the ventricular zone toward the superficial layer of the neocortex. Involved in the accumulation of phosphatidylinositol 3,4,5-trisphosphate (PIP3) in the growth cone of primary hippocampal neurons. This Rattus norvegicus (Rat) protein is Shootin-1.